Reading from the N-terminus, the 505-residue chain is MSSIDRSQSVGGTRTYEVRTYGCQMNVHDSERLAGLLEDAGYVRAPEGSDGDADVVVFNTCAVRENADNKLYGNLGHLAPKKARRPGMQIAVGGCLAQKDRDTIVKRAPWVDVVFGTHNIGKLPVLLERARVQEEAQVEIAESLEAFPSTLPTRRESAYAAWVSISVGCNNTCTFCIVPALRGKEKDRRPGDILAEIEALVAEGVSEITLLGQNVNAYGSDIGDREAFSKLLRACGRIDGLERVRFTSPHPRDFTDDVIAAMAETPNVMPQLHMPLQSGSDAVLKAMRRSYRQERYLGIIEKVRAAIPHAAISTDIIVGFPGETEEDFEQTLHVVREARFAQAFTFQYSKRPGTPAAEMDGQIPKKVVQERYERLVALQEEISWEENKKQVGRTLELMVAEGEGRKDDTTHRLSGRAPDNRLVHFTKPEQEVRPGDVVTVEITYAAPHHLLAEGPVRDVRRTRAGDAWEKRNAAEAAKPAGVMLGLPKVGVPEPLPAVTGGCAVD.

The region spanning 14–132 (RTYEVRTYGC…LPVLLERARV (119 aa)) is the MTTase N-terminal domain. C23, C61, C95, C169, C173, and C176 together coordinate [4Fe-4S] cluster. The Radical SAM core domain maps to 155-386 (RESAYAAWVS…ALQEEISWEE (232 aa)). Residues 388-456 (KKQVGRTLEL…PHHLLAEGPV (69 aa)) form the TRAM domain.

The protein belongs to the methylthiotransferase family. MiaB subfamily. As to quaternary structure, monomer. It depends on [4Fe-4S] cluster as a cofactor.

It is found in the cytoplasm. The catalysed reaction is N(6)-dimethylallyladenosine(37) in tRNA + (sulfur carrier)-SH + AH2 + 2 S-adenosyl-L-methionine = 2-methylsulfanyl-N(6)-dimethylallyladenosine(37) in tRNA + (sulfur carrier)-H + 5'-deoxyadenosine + L-methionine + A + S-adenosyl-L-homocysteine + 2 H(+). Catalyzes the methylthiolation of N6-(dimethylallyl)adenosine (i(6)A), leading to the formation of 2-methylthio-N6-(dimethylallyl)adenosine (ms(2)i(6)A) at position 37 in tRNAs that read codons beginning with uridine. The sequence is that of tRNA-2-methylthio-N(6)-dimethylallyladenosine synthase from Streptomyces viridosporus (strain ATCC 14672 / DSM 40746 / JCM 4963 / KCTC 9882 / NRRL B-12104 / FH 1290) (Streptomyces ghanaensis).